Consider the following 421-residue polypeptide: UDP-N-acetylglucosamine 1-carboxyvinyltransferase (421 aa).

24-25 is a binding site for phosphoenolpyruvate; it reads KN. Arginine 93 contributes to the UDP-N-acetyl-alpha-D-glucosamine binding site. Cysteine 117 acts as the Proton donor in catalysis. A 2-(S-cysteinyl)pyruvic acid O-phosphothioketal modification is found at cysteine 117. Aspartate 307 and isoleucine 329 together coordinate UDP-N-acetyl-alpha-D-glucosamine.

It belongs to the EPSP synthase family. MurA subfamily.

Its subcellular location is the cytoplasm. It carries out the reaction phosphoenolpyruvate + UDP-N-acetyl-alpha-D-glucosamine = UDP-N-acetyl-3-O-(1-carboxyvinyl)-alpha-D-glucosamine + phosphate. It participates in cell wall biogenesis; peptidoglycan biosynthesis. Cell wall formation. Adds enolpyruvyl to UDP-N-acetylglucosamine. The sequence is that of UDP-N-acetylglucosamine 1-carboxyvinyltransferase from Blochmanniella pennsylvanica (strain BPEN).